The sequence spans 356 residues: tRNA N6-adenosine threonylcarbamoyltransferase (356 aa).

Residues His115 and His119 each contribute to the Fe cation site. Substrate is bound by residues 138–142, Asp171, Gly184, and Asn283; that span reads LVSGG. Residue Asp311 coordinates Fe cation.

This sequence belongs to the KAE1 / TsaD family. The cofactor is Fe(2+).

Its subcellular location is the cytoplasm. The enzyme catalyses L-threonylcarbamoyladenylate + adenosine(37) in tRNA = N(6)-L-threonylcarbamoyladenosine(37) in tRNA + AMP + H(+). Functionally, required for the formation of a threonylcarbamoyl group on adenosine at position 37 (t(6)A37) in tRNAs that read codons beginning with adenine. Is involved in the transfer of the threonylcarbamoyl moiety of threonylcarbamoyl-AMP (TC-AMP) to the N6 group of A37, together with TsaE and TsaB. TsaD likely plays a direct catalytic role in this reaction. This is tRNA N6-adenosine threonylcarbamoyltransferase from Prochlorococcus marinus (strain NATL1A).